Consider the following 103-residue polypeptide: Large ribosomal subunit protein bL21 (103 aa).

Belongs to the bacterial ribosomal protein bL21 family. As to quaternary structure, part of the 50S ribosomal subunit. Contacts protein L20.

Functionally, this protein binds to 23S rRNA in the presence of protein L20. The sequence is that of Large ribosomal subunit protein bL21 from Psychromonas ingrahamii (strain DSM 17664 / CCUG 51855 / 37).